A 374-amino-acid chain; its full sequence is MEYKLINTDGRARRGRLTFDRGSVETPAFMPVGTYGTVKGMTPEEVDATGAEILLGNTFHLWLRPGQKVIKAHGDLHDFMNWKGPILTDSGGFQVFSLGKMRKIKEEGVYFRSPINGSEVFLSPEISMDIQYDLGSDIVMIFDECTPYPATEEETDVSMQLSLRWAQRSRDRFDEQQNPNALFGIIQGGCFEQFRDISLDGLTNIGFDGYAIGGLAVGEPKEDMYRILEYIAPKIPEDKPRYLMGVGKPEDLVEGVRRGIDMFDCVMPTRNARNGHLFTTDGVIKIRNAKHREDATTLDSECDCYTCKNYTRAYLYHLDKCGEILGARLNTIHNLSYYQRLMKGLREAIEQGKLEDFVDTFYQRIGKEKPMLDV.

The active-site Proton acceptor is Asp-89. Substrate is bound by residues Asp-89 to Phe-93, Asp-143, Gln-187, and Gly-214. The interval Gly-245 to Asp-251 is RNA binding. Asp-264 serves as the catalytic Nucleophile. The RNA binding; important for wobble base 34 recognition stretch occupies residues Thr-269–Arg-273. Positions 302, 304, 307, and 333 each coordinate Zn(2+).

This sequence belongs to the queuine tRNA-ribosyltransferase family. In terms of assembly, homodimer. Within each dimer, one monomer is responsible for RNA recognition and catalysis, while the other monomer binds to the replacement base PreQ1. Requires Zn(2+) as cofactor.

It catalyses the reaction 7-aminomethyl-7-carbaguanine + guanosine(34) in tRNA = 7-aminomethyl-7-carbaguanosine(34) in tRNA + guanine. It participates in tRNA modification; tRNA-queuosine biosynthesis. Functionally, catalyzes the base-exchange of a guanine (G) residue with the queuine precursor 7-aminomethyl-7-deazaguanine (PreQ1) at position 34 (anticodon wobble position) in tRNAs with GU(N) anticodons (tRNA-Asp, -Asn, -His and -Tyr). Catalysis occurs through a double-displacement mechanism. The nucleophile active site attacks the C1' of nucleotide 34 to detach the guanine base from the RNA, forming a covalent enzyme-RNA intermediate. The proton acceptor active site deprotonates the incoming PreQ1, allowing a nucleophilic attack on the C1' of the ribose to form the product. After dissociation, two additional enzymatic reactions on the tRNA convert PreQ1 to queuine (Q), resulting in the hypermodified nucleoside queuosine (7-(((4,5-cis-dihydroxy-2-cyclopenten-1-yl)amino)methyl)-7-deazaguanosine). The protein is Queuine tRNA-ribosyltransferase of Psychromonas ingrahamii (strain DSM 17664 / CCUG 51855 / 37).